The sequence spans 201 residues: Holliday junction resolvase RecU (201 aa).

Mg(2+)-binding residues include T85, D87, D100, and Q119.

It belongs to the RecU family. Requires Mg(2+) as cofactor.

The protein localises to the cytoplasm. It carries out the reaction Endonucleolytic cleavage at a junction such as a reciprocal single-stranded crossover between two homologous DNA duplexes (Holliday junction).. Endonuclease that resolves Holliday junction intermediates in genetic recombination. Cleaves mobile four-strand junctions by introducing symmetrical nicks in paired strands. Promotes annealing of linear ssDNA with homologous dsDNA. Required for DNA repair, homologous recombination and chromosome segregation. In Pediococcus pentosaceus (strain ATCC 25745 / CCUG 21536 / LMG 10740 / 183-1w), this protein is Holliday junction resolvase RecU.